Consider the following 371-residue polypeptide: N-acetyldiaminopimelate deacetylase (371 aa).

Residue D68 is part of the active site. E127 acts as the Proton acceptor in catalysis.

It belongs to the peptidase M20A family. N-acetyldiaminopimelate deacetylase subfamily.

The enzyme catalyses N-acetyl-(2S,6S)-2,6-diaminopimelate + H2O = (2S,6S)-2,6-diaminopimelate + acetate. Its pathway is amino-acid biosynthesis; L-lysine biosynthesis via DAP pathway; LL-2,6-diaminopimelate from (S)-tetrahydrodipicolinate (acetylase route): step 3/3. Functionally, catalyzes the conversion of N-acetyl-diaminopimelate to diaminopimelate and acetate. This is N-acetyldiaminopimelate deacetylase from Oceanobacillus iheyensis (strain DSM 14371 / CIP 107618 / JCM 11309 / KCTC 3954 / HTE831).